A 122-amino-acid polypeptide reads, in one-letter code: Proteasome assembly chaperone 3 (122 aa).

The residue at position 1 (Met1) is an N-acetylmethionine.

Belongs to the PSMG3 family. Homodimer. Interacts with PSMG4. Interacts directly with alpha and beta subunits of the 20S proteasome but dissociates before the formation of half-proteasomes, probably upon recruitment of POMP.

Functionally, chaperone protein which promotes assembly of the 20S proteasome. May cooperate with PSMG1-PSMG2 heterodimers to orchestrate the correct assembly of proteasomes. This is Proteasome assembly chaperone 3 from Homo sapiens (Human).